The sequence spans 374 residues: Putative phosphoserine aminotransferase (374 aa).

Arginine 48 serves as a coordination point for L-glutamate. Pyridoxal 5'-phosphate is bound by residues 82 to 83 (AT), phenylalanine 106, threonine 152, aspartate 174, and glutamine 197. Lysine 198 carries the post-translational modification N6-(pyridoxal phosphate)lysine. 249–250 (NT) contacts pyridoxal 5'-phosphate.

This sequence belongs to the class-V pyridoxal-phosphate-dependent aminotransferase family. SerC subfamily. In terms of assembly, homodimer. The cofactor is pyridoxal 5'-phosphate.

Its subcellular location is the cytoplasm. The catalysed reaction is O-phospho-L-serine + 2-oxoglutarate = 3-phosphooxypyruvate + L-glutamate. It carries out the reaction 4-(phosphooxy)-L-threonine + 2-oxoglutarate = (R)-3-hydroxy-2-oxo-4-phosphooxybutanoate + L-glutamate. The protein operates within amino-acid biosynthesis; L-serine biosynthesis; L-serine from 3-phospho-D-glycerate: step 2/3. Its pathway is cofactor biosynthesis; pyridoxine 5'-phosphate biosynthesis; pyridoxine 5'-phosphate from D-erythrose 4-phosphate: step 3/5. Its function is as follows. Catalyzes the reversible conversion of 3-phosphohydroxypyruvate to phosphoserine and of 3-hydroxy-2-oxo-4-phosphonooxybutanoate to phosphohydroxythreonine. This is Putative phosphoserine aminotransferase from Mycobacterium avium (strain 104).